Reading from the N-terminus, the 151-residue chain is Small ribosomal subunit protein uS11 (151 aa).

Position 16 is a phosphoserine (S16). Glycyl lysine isopeptide (Lys-Gly) (interchain with G-Cter in SUMO2) cross-links involve residues K61, K63, and K106. A disordered region spans residues 131-151; sequence DVTPIPSDSTRRKGGRRGRRL. Position 133 is a phosphothreonine (T133). A Phosphoserine modification is found at S139. The segment covering 142-151 has biased composition (basic residues); it reads RKGGRRGRRL.

This sequence belongs to the universal ribosomal protein uS11 family. As to quaternary structure, component of the small ribosomal subunit. Part of the small subunit (SSU) processome, composed of more than 70 proteins and the RNA chaperone small nucleolar RNA (snoRNA) U3.

The protein resides in the cytoplasm. It is found in the nucleus. It localises to the nucleolus. Its function is as follows. Component of the small ribosomal subunit. The ribosome is a large ribonucleoprotein complex responsible for the synthesis of proteins in the cell. Part of the small subunit (SSU) processome, first precursor of the small eukaryotic ribosomal subunit. During the assembly of the SSU processome in the nucleolus, many ribosome biogenesis factors, an RNA chaperone and ribosomal proteins associate with the nascent pre-rRNA and work in concert to generate RNA folding, modifications, rearrangements and cleavage as well as targeted degradation of pre-ribosomal RNA by the RNA exosome. The sequence is that of Small ribosomal subunit protein uS11 (Rps14) from Mus musculus (Mouse).